The following is a 255-amino-acid chain: Hydroxyacylglutathione hydrolase (255 aa).

Positions 56, 58, 60, 61, 114, 133, and 171 each coordinate Zn(2+).

Belongs to the metallo-beta-lactamase superfamily. Glyoxalase II family. In terms of assembly, monomer. Zn(2+) serves as cofactor.

It carries out the reaction an S-(2-hydroxyacyl)glutathione + H2O = a 2-hydroxy carboxylate + glutathione + H(+). It functions in the pathway secondary metabolite metabolism; methylglyoxal degradation; (R)-lactate from methylglyoxal: step 2/2. Thiolesterase that catalyzes the hydrolysis of S-D-lactoyl-glutathione to form glutathione and D-lactic acid. This is Hydroxyacylglutathione hydrolase from Fuscovulum blasticum (Rhodobacter blasticus).